Reading from the N-terminus, the 335-residue chain is Holliday junction branch migration complex subunit RuvB (335 aa).

A large ATPase domain (RuvB-L) region spans residues 4–184 (ADRLVSAEVL…FGIVQRLEFY (181 aa)). ATP is bound by residues Ile23, Arg24, Gly65, Lys68, Thr69, Thr70, 131-133 (EDY), Arg174, Tyr184, and Arg221. A Mg(2+)-binding site is contributed by Thr69. Positions 185–255 (NVDDLQSIVS…IATRALDMLS (71 aa)) are small ATPAse domain (RuvB-S). The segment at 258–335 (AAGFDYLDRK…RHFGMVRNQE (78 aa)) is head domain (RuvB-H). Residues Arg294, Arg313, and Arg318 each coordinate DNA.

Belongs to the RuvB family. Homohexamer. Forms an RuvA(8)-RuvB(12)-Holliday junction (HJ) complex. HJ DNA is sandwiched between 2 RuvA tetramers; dsDNA enters through RuvA and exits via RuvB. An RuvB hexamer assembles on each DNA strand where it exits the tetramer. Each RuvB hexamer is contacted by two RuvA subunits (via domain III) on 2 adjacent RuvB subunits; this complex drives branch migration. In the full resolvosome a probable DNA-RuvA(4)-RuvB(12)-RuvC(2) complex forms which resolves the HJ.

The protein resides in the cytoplasm. It carries out the reaction ATP + H2O = ADP + phosphate + H(+). In terms of biological role, the RuvA-RuvB-RuvC complex processes Holliday junction (HJ) DNA during genetic recombination and DNA repair, while the RuvA-RuvB complex plays an important role in the rescue of blocked DNA replication forks via replication fork reversal (RFR). RuvA specifically binds to HJ cruciform DNA, conferring on it an open structure. The RuvB hexamer acts as an ATP-dependent pump, pulling dsDNA into and through the RuvAB complex. RuvB forms 2 homohexamers on either side of HJ DNA bound by 1 or 2 RuvA tetramers; 4 subunits per hexamer contact DNA at a time. Coordinated motions by a converter formed by DNA-disengaged RuvB subunits stimulates ATP hydrolysis and nucleotide exchange. Immobilization of the converter enables RuvB to convert the ATP-contained energy into a lever motion, pulling 2 nucleotides of DNA out of the RuvA tetramer per ATP hydrolyzed, thus driving DNA branch migration. The RuvB motors rotate together with the DNA substrate, which together with the progressing nucleotide cycle form the mechanistic basis for DNA recombination by continuous HJ branch migration. Branch migration allows RuvC to scan DNA until it finds its consensus sequence, where it cleaves and resolves cruciform DNA. In Photorhabdus laumondii subsp. laumondii (strain DSM 15139 / CIP 105565 / TT01) (Photorhabdus luminescens subsp. laumondii), this protein is Holliday junction branch migration complex subunit RuvB.